A 37-amino-acid polypeptide reads, in one-letter code: Large ribosomal subunit protein bL36 (37 aa).

It belongs to the bacterial ribosomal protein bL36 family.

This chain is Large ribosomal subunit protein bL36, found in Cutibacterium acnes (strain DSM 16379 / KPA171202) (Propionibacterium acnes).